Here is a 158-residue protein sequence, read N- to C-terminus: Protein Smg homolog (158 aa).

This sequence belongs to the Smg family.

The chain is Protein Smg homolog from Thioalkalivibrio sulfidiphilus (strain HL-EbGR7).